A 558-amino-acid chain; its full sequence is uncharacterized protein (558 aa).

A run of 6 helical transmembrane segments spans residues 63 to 83, 90 to 110, 143 to 163, 168 to 188, 226 to 246, and 258 to 278; these read LTGI…PSIY, VTFG…TYWI, VAAV…TLYG, VFVT…ATNC, SLGS…VLLV, and VLIL…ILAW. The 52-residue stretch at 279 to 330 folds into the HAMP domain; sequence LTAAPVRVVRAALKRVEQGDLRGDLVVFDGTELGELQRGFNAMVNGLRERER. The Guanylate cyclase domain maps to 362–486; that stretch reads AVVFVDIVGS…KPVNQAARLC (125 aa). Residues 529–558 are disordered; it reads TQLASPHRRPPGSIHLTAEHAEEIRTDRLG. Over residues 545 to 558 the composition is skewed to basic and acidic residues; it reads TAEHAEEIRTDRLG.

Belongs to the adenylyl cyclase class-3 family.

It localises to the cell membrane. This is an uncharacterized protein from Mycobacterium tuberculosis (strain CDC 1551 / Oshkosh).